A 263-amino-acid polypeptide reads, in one-letter code: Pimeloyl-[acyl-carrier protein] methyl ester esterase (263 aa).

Residues tryptophan 28, 86 to 87 (SL), and 149 to 153 (FLAIQ) contribute to the substrate site. The active-site Nucleophile is the serine 86. Active-site residues include aspartate 213 and histidine 240. Histidine 240 lines the substrate pocket.

The protein belongs to the AB hydrolase superfamily. Carboxylesterase BioH family. Monomer.

Its subcellular location is the cytoplasm. It carries out the reaction 6-carboxyhexanoyl-[ACP] methyl ester + H2O = 6-carboxyhexanoyl-[ACP] + methanol + H(+). It functions in the pathway cofactor biosynthesis; biotin biosynthesis. In terms of biological role, the physiological role of BioH is to remove the methyl group introduced by BioC when the pimeloyl moiety is complete. It allows to synthesize pimeloyl-ACP via the fatty acid synthetic pathway through the hydrolysis of the ester bonds of pimeloyl-ACP esters. This chain is Pimeloyl-[acyl-carrier protein] methyl ester esterase, found in Shewanella oneidensis (strain ATCC 700550 / JCM 31522 / CIP 106686 / LMG 19005 / NCIMB 14063 / MR-1).